A 54-amino-acid chain; its full sequence is Large ribosomal subunit protein bL33 (54 aa).

The protein belongs to the bacterial ribosomal protein bL33 family.

This Xylella fastidiosa (strain M23) protein is Large ribosomal subunit protein bL33.